A 627-amino-acid polypeptide reads, in one-letter code: Mitochondrial Rho GTPase 1 (627 aa).

The Miro 1 domain maps to 1 to 169 (MATVRICVCG…FFLCQKAVTH (169 aa)). Topologically, residues 1 to 599 (MATVRICVCG…PRSNEEGPDR (599 aa)) are cytoplasmic. GTP is bound by residues 10–17 (GDESTGKS), 58–62 (DTSAR), and 114–117 (NKSD). EF-hand domains are found at residues 185-220 (LCINALKRIFYLCDKDQDGYLNEQEMRDFQARCFDK) and 305-340 (AGYRFFVDLFLIFDKDNDGGLNDEELEALFAPAPGL). Ca(2+) contacts are provided by Asp198, Asp200, Asp202, Tyr204, Glu209, Asp318, Asp320, Asp322, and Glu329. The Miro 2 domain occupies 420–584 (RNVVLCYVLG…FVAYADAATT (165 aa)). GTP-binding positions include 429–436 (GASGAGKS), 465–469 (ELPGG), and 534–537 (LKAD). A helical; Anchor for type IV membrane protein membrane pass occupies residues 600-620 (TSLYIALGATACAGVAALTIW). The Mitochondrial intermembrane portion of the chain corresponds to 621–627 (RRATNAL).

The protein belongs to the mitochondrial Rho GTPase family.

The protein resides in the mitochondrion outer membrane. Mitochondrial GTPase involved in mitochondrial trafficking. Probably involved in control of anterograde transport of mitochondria and their subcellular distribution. This Gibberella zeae (strain ATCC MYA-4620 / CBS 123657 / FGSC 9075 / NRRL 31084 / PH-1) (Wheat head blight fungus) protein is Mitochondrial Rho GTPase 1 (GEM1).